We begin with the raw amino-acid sequence, 447 residues long: 1-aminocyclopropane-1-carboxylate synthase 7 (447 aa).

The substrate site is built by Glu-61 and Tyr-100. Position 285 is an N6-(pyridoxal phosphate)lysine (Lys-285).

This sequence belongs to the class-I pyridoxal-phosphate-dependent aminotransferase family. In terms of assembly, homodimer and heterodimer. In vivo, the relevance of heterodimerization with other ACS enzymes is however unsure. Interacts with XBAT32. The cofactor is pyridoxal 5'-phosphate. In terms of processing, ubiquitinated by XBAT32. Ubiquitination probably leads to its subsequent degradation, thus controlling ethylene production. As to expression, expressed in roots.

The catalysed reaction is S-adenosyl-L-methionine = 1-aminocyclopropane-1-carboxylate + S-methyl-5'-thioadenosine + H(+). Its pathway is alkene biosynthesis; ethylene biosynthesis via S-adenosyl-L-methionine; ethylene from S-adenosyl-L-methionine: step 1/2. In terms of biological role, 1-aminocyclopropane-1-carboxylate synthase (ACS) enzymes catalyze the conversion of S-adenosyl-L-methionine (SAM) into 1-aminocyclopropane-1-carboxylate (ACC), a direct precursor of ethylene. The protein is 1-aminocyclopropane-1-carboxylate synthase 7 (ACS7) of Arabidopsis thaliana (Mouse-ear cress).